A 229-amino-acid polypeptide reads, in one-letter code: Potassium/proton antiporter CemA (229 aa).

The next 3 membrane-spanning stretches (helical) occupy residues 7–27, 106–126, and 189–209; these read LTPL…SLSF, IILH…FFIM, and IISG…KYWI.

Belongs to the CemA family.

The protein localises to the plastid. It is found in the chloroplast inner membrane. It catalyses the reaction K(+)(in) + H(+)(out) = K(+)(out) + H(+)(in). In terms of biological role, contributes to K(+)/H(+) antiport activity by supporting proton efflux to control proton extrusion and homeostasis in chloroplasts in a light-dependent manner to modulate photosynthesis. Prevents excessive induction of non-photochemical quenching (NPQ) under continuous-light conditions. Indirectly promotes efficient inorganic carbon uptake into chloroplasts. In Ceratophyllum demersum (Rigid hornwort), this protein is Potassium/proton antiporter CemA.